The primary structure comprises 548 residues: Terpene synthase 1 (548 aa).

Residues D301, D305, D445, and E453 each coordinate Mg(2+). The DDXXD motif motif lies at 301–305 (DDTYD).

Belongs to the terpene synthase family. Tpsa subfamily. Requires Mg(2+) as cofactor. Mn(2+) is required as a cofactor.

The enzyme catalyses (2E,6E)-farnesyl diphosphate = (+)-valencene + diphosphate. The protein operates within secondary metabolite biosynthesis; terpenoid biosynthesis. In terms of biological role, sesquiterpene synthase involved in the biosynthesis of volatile compounds which contribute to fruit flavor and aroma. Mediates the conversion of (2E,6E)-farnesyl diphosphate (FPP) into (+)-valencene. No activity detected with geranyl diphosphate (GPP). The sequence is that of Terpene synthase 1 from Citrus sinensis (Sweet orange).